The chain runs to 436 residues: Type II methyltransferase M.BsuRI (436 aa).

The SAM-dependent MTase C5-type domain maps to 59–409; sequence INVLSLFSGC…SPIANWAINY (351 aa). Cys-157 is a catalytic residue.

It belongs to the class I-like SAM-binding methyltransferase superfamily. C5-methyltransferase family. In terms of assembly, monomer.

The enzyme catalyses a 2'-deoxycytidine in DNA + S-adenosyl-L-methionine = a 5-methyl-2'-deoxycytidine in DNA + S-adenosyl-L-homocysteine + H(+). Functionally, a methylase, recognizes the double-stranded sequence 5'-GGCC-3', methylates C-3 on both strands, and protects the DNA from cleavage by the BsuRI endonuclease. The sequence is that of Type II methyltransferase M.BsuRI (hsdRM) from Bacillus subtilis.